A 127-amino-acid chain; its full sequence is Large ribosomal subunit protein bL12 (127 aa).

Belongs to the bacterial ribosomal protein bL12 family. As to quaternary structure, homodimer. Part of the ribosomal stalk of the 50S ribosomal subunit. Forms a multimeric L10(L12)X complex, where L10 forms an elongated spine to which 2 to 4 L12 dimers bind in a sequential fashion. Binds GTP-bound translation factors.

Functionally, forms part of the ribosomal stalk which helps the ribosome interact with GTP-bound translation factors. Is thus essential for accurate translation. This is Large ribosomal subunit protein bL12 from Leptospira interrogans serogroup Icterohaemorrhagiae serovar copenhageni (strain Fiocruz L1-130).